A 348-amino-acid chain; its full sequence is Anthranilate phosphoribosyltransferase (348 aa).

5-phospho-alpha-D-ribose 1-diphosphate is bound by residues Gly93, 96-97 (GD), Thr101, 103-106 (NVST), 121-129 (KHGNRAVSS), and Ser133. An anthranilate-binding site is contributed by Gly93. Mg(2+) is bound at residue Ser105. Asn124 lines the anthranilate pocket. An anthranilate-binding site is contributed by Arg179. Mg(2+) contacts are provided by Asp238 and Glu239.

It belongs to the anthranilate phosphoribosyltransferase family. As to quaternary structure, homodimer. It depends on Mg(2+) as a cofactor.

It carries out the reaction N-(5-phospho-beta-D-ribosyl)anthranilate + diphosphate = 5-phospho-alpha-D-ribose 1-diphosphate + anthranilate. It participates in amino-acid biosynthesis; L-tryptophan biosynthesis; L-tryptophan from chorismate: step 2/5. Functionally, catalyzes the transfer of the phosphoribosyl group of 5-phosphorylribose-1-pyrophosphate (PRPP) to anthranilate to yield N-(5'-phosphoribosyl)-anthranilate (PRA). This Desulfotalea psychrophila (strain LSv54 / DSM 12343) protein is Anthranilate phosphoribosyltransferase.